A 287-amino-acid chain; its full sequence is Bifunctional protein FolD (287 aa).

NADP(+) is bound by residues 160–162, Ser-189, and Thr-230; that span reads GRS.

It belongs to the tetrahydrofolate dehydrogenase/cyclohydrolase family. Homodimer.

The catalysed reaction is (6R)-5,10-methylene-5,6,7,8-tetrahydrofolate + NADP(+) = (6R)-5,10-methenyltetrahydrofolate + NADPH. It catalyses the reaction (6R)-5,10-methenyltetrahydrofolate + H2O = (6R)-10-formyltetrahydrofolate + H(+). The protein operates within one-carbon metabolism; tetrahydrofolate interconversion. Catalyzes the oxidation of 5,10-methylenetetrahydrofolate to 5,10-methenyltetrahydrofolate and then the hydrolysis of 5,10-methenyltetrahydrofolate to 10-formyltetrahydrofolate. This is Bifunctional protein FolD from Chlamydia abortus (strain DSM 27085 / S26/3) (Chlamydophila abortus).